The sequence spans 184 residues: TRAF-interacting protein with FHA domain-containing protein A (184 aa).

T9 is modified (phosphothreonine; by ALPK1). The region spanning 47–103 (VKFGRNSNICHYTFQDKQVSRVQFSLQLFKKFNSSVLSFEIKNMSKKTNLIVDSREL) is the FHA domain. The segment at 165 to 184 (TYSLCSSQSSSPTEMDENES) is disordered. The span at 167–177 (SLCSSQSSSPT) shows a compositional bias: polar residues.

Belongs to the TIFA family. Homooligomer; homooligomerizes following phosphorylation at Thr-9. Interacts with IRAK1, TRAF2 and TRAF6. Interacts with TIFAB; binding to TIFAB inhibits TRAF6 activation, possibly by inducing a conformational change in TIFA. Interacts with ZCCHC11; binding to ZCCHC11 suppresses the TRAF6-dependent activation of NF-kappa-B. Phosphorylated at Thr-9 following detection of ADP-D-glycero-beta-D-manno-heptose (ADP-Heptose) by ALPK1. Phosphorylation at Thr-9 by ALPK1 leads to the formation of an intermolecular binding between the FHA domain and phosphorylated Thr-9, promoting TIFA oligomerization and TIFA-mediated NF-kappa-B activation.

The protein resides in the cytoplasm. Functionally, adapter molecule that plays a key role in the activation of pro-inflammatory NF-kappa-B signaling following detection of bacterial pathogen-associated molecular pattern metabolites (PAMPs). Promotes activation of an innate immune response by inducing the oligomerization and polyubiquitination of TRAF6, which leads to the activation of TAK1 and IKK through a proteasome-independent mechanism. TIFA-dependent innate immune response is triggered by ADP-D-glycero-beta-D-manno-heptose (ADP-Heptose), a potent PAMP present in all Gram-negative and some Gram-positive bacteria: ADP-Heptose is recognized by ALPK1, which phosphorylates TIFA at Thr-9, leading to TIFA homooligomerization and subsequent activation of pro-inflammatory NF-kappa-B signaling. The chain is TRAF-interacting protein with FHA domain-containing protein A from Homo sapiens (Human).